The following is a 208-amino-acid chain: Uracil phosphoribosyltransferase (208 aa).

Residues R78, R103, and 130–138 (DPMLATGGT) each bind 5-phospho-alpha-D-ribose 1-diphosphate. Uracil is bound by residues I193 and 198–200 (GDA). A 5-phospho-alpha-D-ribose 1-diphosphate-binding site is contributed by D199.

The protein belongs to the UPRTase family. The cofactor is Mg(2+).

It catalyses the reaction UMP + diphosphate = 5-phospho-alpha-D-ribose 1-diphosphate + uracil. It functions in the pathway pyrimidine metabolism; UMP biosynthesis via salvage pathway; UMP from uracil: step 1/1. With respect to regulation, allosterically activated by GTP. Its function is as follows. Catalyzes the conversion of uracil and 5-phospho-alpha-D-ribose 1-diphosphate (PRPP) to UMP and diphosphate. This Nitratidesulfovibrio vulgaris (strain DSM 19637 / Miyazaki F) (Desulfovibrio vulgaris) protein is Uracil phosphoribosyltransferase.